The sequence spans 173 residues: MESQVRQNFHQDCEAGLNRTVNLKFHSSYVYLSMASYFNRDDVALSNFAKFFRERSEEEKEHAEKLIEYQNQRGGRVFLQSVEKPERDDWANGLEALQTALKLQKSVNQALLDLHAVAADKSDPHMTDFLESPYLSESVETIKKLGDHITSLKKLWSSHPGMAEYLFNKHTLG.

In terms of domain architecture, Ferritin-like diiron spans 7–156; it reads QNFHQDCEAG…DHITSLKKLW (150 aa). Residues Glu59 and His62 each contribute to the Fe cation site.

Belongs to the ferritin family. In terms of assembly, oligomer of 24 subunits. The functional molecule is roughly spherical and contains a central cavity into which the polymeric mineral iron core is deposited.

Functionally, stores iron in a soluble, non-toxic, readily available form. Important for iron homeostasis. Iron is taken up in the ferrous form and deposited as ferric hydroxides after oxidation. This is Ferritin, lower subunit from Aquarana catesbeiana (American bullfrog).